The chain runs to 232 residues: Octanoyltransferase (232 aa).

Positions 32 to 219 constitute a BPL/LPL catalytic domain; the sequence is NIIYDTLILL…SFKVFNFSSY (188 aa). Residues 77–84, 140–142, and 153–155 contribute to the substrate site; these read RGGDITYH, AIG, and GFA. C171 functions as the Acyl-thioester intermediate in the catalytic mechanism.

This sequence belongs to the LipB family.

It localises to the cytoplasm. It catalyses the reaction octanoyl-[ACP] + L-lysyl-[protein] = N(6)-octanoyl-L-lysyl-[protein] + holo-[ACP] + H(+). The protein operates within protein modification; protein lipoylation via endogenous pathway; protein N(6)-(lipoyl)lysine from octanoyl-[acyl-carrier-protein]: step 1/2. Catalyzes the transfer of endogenously produced octanoic acid from octanoyl-acyl-carrier-protein onto the lipoyl domains of lipoate-dependent enzymes. Lipoyl-ACP can also act as a substrate although octanoyl-ACP is likely to be the physiological substrate. The protein is Octanoyltransferase of Dictyoglomus turgidum (strain DSM 6724 / Z-1310).